Reading from the N-terminus, the 246-residue chain is Complement C1q tumor necrosis factor-related protein 3 (246 aa).

Positions 1-22 are cleaved as a signal peptide; that stretch reads MLGRQRIWWHLLPLLFLPFCLC. Residues 51-113 form the Collagen-like domain; the sequence is GYQGPPGPPG…KGEKGYPGVP (63 aa). Residues 53–112 are disordered; the sequence is QGPPGPPGPPGIPGNHGNNGNNGATGHEGAKGEKGDKGDLGPRGERGQHGPKGEKGYPGV. Residues 55-64 are compositionally biased toward pro residues; sequence PPGPPGPPGI. Residues 65-74 are compositionally biased toward low complexity; that stretch reads PGNHGNNGNN. Residues 80 to 107 show a composition bias toward basic and acidic residues; that stretch reads EGAKGEKGDKGDLGPRGERGQHGPKGEK. A C1q domain is found at 113–246; sequence PPELQIAFMA…FAGFLLFETK (134 aa).

Its subcellular location is the secreted. In Mus musculus (Mouse), this protein is Complement C1q tumor necrosis factor-related protein 3 (C1qtnf3).